Consider the following 402-residue polypeptide: 8-amino-7-oxononanoate synthase (402 aa).

R26 lines the substrate pocket. 114 to 115 (GY) contributes to the pyridoxal 5'-phosphate binding site. H139 serves as a coordination point for substrate. S182, H210, and T239 together coordinate pyridoxal 5'-phosphate. K242 is modified (N6-(pyridoxal phosphate)lysine). T359 lines the substrate pocket.

This sequence belongs to the class-II pyridoxal-phosphate-dependent aminotransferase family. BioF subfamily. Homodimer. The cofactor is pyridoxal 5'-phosphate.

The enzyme catalyses 6-carboxyhexanoyl-[ACP] + L-alanine + H(+) = (8S)-8-amino-7-oxononanoate + holo-[ACP] + CO2. It participates in cofactor biosynthesis; biotin biosynthesis. In terms of biological role, catalyzes the decarboxylative condensation of pimeloyl-[acyl-carrier protein] and L-alanine to produce 8-amino-7-oxononanoate (AON), [acyl-carrier protein], and carbon dioxide. The sequence is that of 8-amino-7-oxononanoate synthase from Halorhodospira halophila (strain DSM 244 / SL1) (Ectothiorhodospira halophila (strain DSM 244 / SL1)).